Reading from the N-terminus, the 480-residue chain is Thyroid receptor-interacting protein 6 (480 aa).

Over residues 1-12 (MSGPTWLPPKQP) the composition is skewed to pro residues. The segment at 1–43 (MSGPTWLPPKQPEPSRLPQGRSLPRGALGPPTAHGATLQPHPR) is disordered. Position 25 is an asymmetric dimethylarginine; alternate (Arg-25). Arg-25 bears the Omega-N-methylarginine; alternate mark. Residue Tyr-55 is modified to Phosphotyrosine; by SRC. The interval 57-84 (PPGVPEDRGPTWVGSHGTPQRLQGLPPD) is disordered. Ser-92 is subject to Phosphoserine. Residues 107 to 134 (LDGGRSHAPRRPDRQAFEAPPPHAYRGG) form a disordered region. The span at 108–122 (DGGRSHAPRRPDRQA) shows a compositional bias: basic and acidic residues. 3 positions are modified to omega-N-methylarginine: Arg-111, Arg-183, and Arg-190. Ser-193 carries the post-translational modification Phosphoserine. An omega-N-methylarginine mark is found at Arg-209 and Arg-242. A disordered region spans residues 218–257 (RSHREPGPGVPEGPSGVHIPAGGGRGGGHEPQGPLGQPPE). A compositionally biased stretch (gly residues) spans 238-247 (AGGGRGGGHE). LIM zinc-binding domains lie at 281–339 (GRCG…YVAT), 341–401 (EKCS…KFAP), and 404–471 (SVCG…RIQE). An interaction with MAGI1 and PTPN13 region spans residues 473–480 (SATVTTDC).

Belongs to the zyxin/ajuba family. As to quaternary structure, specifically interacts with the ligand binding domain of the thyroid receptor (TR) in the presence of thyroid hormone. Interacts (via the third LIM domain and C-terminus) with PTPN13 (via the second PDZ domain). Interacts (via the second LIM domain or via the third LIM domain plus C-terminus) with PDLIM4 (via PDZ domain). Found in a complex with PTPN13 and PDLIM4. Interacts with SVIL isoform 2. Interacts with LPAR2 but not other LPA receptors. Interacts with PRKAA2. Interacts with MAGI1. Interacts with SCRIB. In case of infection, interacts with S.typhimurium protein sseI. Post-translationally, phosphorylation at Tyr-55 by SRC is required for enhancement of lysophosphatidic acid-induced cell migration. Tyr-55 is dephosphorylated by PTPN13. In terms of tissue distribution, highly expressed in kidney, stomach, lung, heart and testis. Low expression levels in brain, colon, thymus, pancreas and skin. Not expressed in skeletal muscle.

It is found in the cytoplasm. The protein resides in the cytoskeleton. It localises to the cell junction. The protein localises to the focal adhesion. Its subcellular location is the nucleus. Functionally, relays signals from the cell surface to the nucleus to weaken adherens junction and promote actin cytoskeleton reorganization and cell invasiveness. Involved in lysophosphatidic acid-induced cell adhesion and migration. Acts as a transcriptional coactivator for NF-kappa-B and JUN, and mediates the transrepression of these transcription factors induced by glucocorticoid receptor. In Mus musculus (Mouse), this protein is Thyroid receptor-interacting protein 6 (Trip6).